Here is a 209-residue protein sequence, read N- to C-terminus: Large ribosomal subunit protein uL3 (209 aa).

The disordered stretch occupies residues 127-152; sequence SGGPSSHGSKFHRHLGSTGQAATPSR. The segment covering 143–152 has biased composition (polar residues); that stretch reads STGQAATPSR.

This sequence belongs to the universal ribosomal protein uL3 family. Part of the 50S ribosomal subunit. Forms a cluster with proteins L14 and L19.

One of the primary rRNA binding proteins, it binds directly near the 3'-end of the 23S rRNA, where it nucleates assembly of the 50S subunit. This Borrelia hermsii (strain HS1 / DAH) protein is Large ribosomal subunit protein uL3.